The following is a 638-amino-acid chain: Chaperone protein DnaK (638 aa).

The residue at position 198 (Thr198) is a Phosphothreonine; by autocatalysis. The tract at residues 602 to 638 (QAKSQAQGGEEAQAKDAGQSNDDVVDAEFEEVKDDKK) is disordered. A compositionally biased stretch (acidic residues) spans 624–638 (DVVDAEFEEVKDDKK).

It belongs to the heat shock protein 70 family.

Acts as a chaperone. The sequence is that of Chaperone protein DnaK from Shewanella denitrificans (strain OS217 / ATCC BAA-1090 / DSM 15013).